The sequence spans 201 residues: Small ribosomal subunit protein uS4c (201 aa).

An S4 RNA-binding domain is found at 89-151; the sequence is MRLDNILFRL…QKSKTLIQNY (63 aa).

Belongs to the universal ribosomal protein uS4 family. In terms of assembly, part of the 30S ribosomal subunit. Contacts protein S5. The interaction surface between S4 and S5 is involved in control of translational fidelity.

It localises to the plastid. It is found in the chloroplast. In terms of biological role, one of the primary rRNA binding proteins, it binds directly to 16S rRNA where it nucleates assembly of the body of the 30S subunit. Its function is as follows. With S5 and S12 plays an important role in translational accuracy. This chain is Small ribosomal subunit protein uS4c (rps4), found in Phaseolus vulgaris (Kidney bean).